The sequence spans 481 residues: uncharacterized protein (481 aa).

The next 11 helical transmembrane spans lie at 14 to 34 (LGFC…GIFL), 46 to 66 (FAPM…IVFA), 90 to 110 (IGIY…GVLA), 134 to 154 (FSVK…INLF), 167 to 187 (TVGK…IITT), 218 to 238 (FSSM…FESI), 258 to 278 (IAIF…MLLG), 303 to 323 (IIVV…SFGA), 377 to 397 (LAVI…IALA), 411 to 431 (AFTD…LAVS), and 446 to 466 (YFSI…AYLH).

Belongs to the amino acid-polyamine-organocation (APC) superfamily.

The protein localises to the cell membrane. In terms of biological role, probable amino-acid or metabolite transport protein. This is an uncharacterized protein from Mycobacterium bovis (strain ATCC BAA-935 / AF2122/97).